Here is a 126-residue protein sequence, read N- to C-terminus: Large ribosomal subunit protein bL17 (126 aa).

This sequence belongs to the bacterial ribosomal protein bL17 family. In terms of assembly, part of the 50S ribosomal subunit. Contacts protein L32.

The protein is Large ribosomal subunit protein bL17 of Limosilactobacillus fermentum (strain NBRC 3956 / LMG 18251) (Lactobacillus fermentum).